The following is a 604-amino-acid chain: Putative O-acetyltransferase SACOL0978 (604 aa).

Helical transmembrane passes span 15-35 (YIPG…IYHL), 43-63 (GFLG…SLLL), 85-105 (LLPA…LLKS), 150-170 (AIEE…LLTI), 176-196 (IGFI…FIYS), 212-232 (LQTL…KLKN), 240-260 (YVID…FFII), 267-287 (IYDG…ASVV), 310-330 (YSLY…YVDG), 332-352 (IPVY…ELSY), and 377-397 (FIRM…LVGA). Residues Ser-459, Asp-581, and His-584 contribute to the active site.

It belongs to the acyltransferase 3 family.

Its subcellular location is the cell membrane. This is Putative O-acetyltransferase SACOL0978 from Staphylococcus aureus (strain COL).